The chain runs to 1940 residues: Protein ORF1940 (1940 aa).

4 TPR repeats span residues 119–153 (IKACSNAQCSPETVESNFQEAIRDYEAASSIALQY), 155–186 (FQSLAEQLSDAVNQLKTALSNYEKTVATLQQI), 480–513 (RLPDIRIGAIDAAKEKIGDLMSDFKEKISIGLHG), and 617–652 (GKSMGDKTVLTADYMEGEVLGLIKNYEADVKISPTS). Disordered stretches follow at residues 1160 to 1239 (PSKV…PGAV) and 1519 to 1571 (KGPS…TVTS). Residues 1164–1185 (QNTTQPSATQNTTTQPTAQNTS) show a composition bias toward low complexity. Residues 1186 to 1200 (LPGATQNTTLPTPSK) show a composition bias toward polar residues. Low complexity-rich tracts occupy residues 1201 to 1235 (VQNTTQPSTTPNTTLSTPSTTPNTTTQPTVQNTSL), 1521 to 1539 (PSTTQNTTQPSTTPNMTPP), and 1561 to 1571 (TPGSGSQTVTS). The stretch at 1691–1724 (KDLNKSVGTSVVEEAKYNSTLQTYLAGLGIKDLN) is one TPR 5 repeat. The tract at residues 1862-1940 (TTTHHITPPP…AEQAEQVLLI (79 aa)) is disordered. Residues 1868–1883 (TPPPPPPPPPPPPPPK) are compositionally biased toward pro residues. The span at 1884-1894 (TQTITTTTQIT) shows a compositional bias: low complexity. Over residues 1895-1912 (PPSPPPTPPPPPPPPKSP) the composition is skewed to pro residues.

This is Protein ORF1940 from Acidianus convivator (ATV).